A 123-amino-acid polypeptide reads, in one-letter code: UPF0102 protein CLD_2200 (123 aa).

Belongs to the UPF0102 family.

This is UPF0102 protein CLD_2200 from Clostridium botulinum (strain Okra / Type B1).